The sequence spans 901 residues: Vacuolar protein sorting-associated protein 41 homolog (901 aa).

Positions 1–37 (MDETHENEASDSFDPVFENSYHDDVTFNTEDDDEPPL) are disordered. The CHCR repeat unit spans residues 618 to 760 (LRLLLDNADS…VAEFPAHFSQ (143 aa)). Residues 839-893 (CSLCAQIIINSNQETTKKFSDIKVFKCGHIFHLACSTSEMERRQSIEEGLCIACS) form an RING-type; atypical zinc finger.

It belongs to the VPS41 family. In terms of assembly, probable component of the homotypic fusion and vacuole protein sorting (HOPS) complex consisting of the core class C Vps proteins vps-11, vps-16, vps-18, and which further associates with vps-33.1, vps-39 and vps-41.

It localises to the endosome membrane. The protein resides in the late endosome membrane. Its subcellular location is the early endosome membrane. The protein localises to the lysosome membrane. It is found in the golgi apparatus. It localises to the trans-Golgi network. The protein resides in the cytoplasmic vesicle. Its subcellular location is the clathrin-coated vesicle. The protein localises to the cytoplasm. It is found in the cytosol. Its function is as follows. Plays a role in vesicle-mediated protein trafficking to lysosomal compartments including the endocytic membrane transport pathways. Believed to act in part as a core component of the putative HOPS endosomal tethering complex which is proposed to be involved in the rab-5-to-rab-7 endosome conversion probably implicating sand-1, and via binding SNAREs and SNARE complexes to mediate tethering and docking events during SNARE-mediated membrane fusion. The HOPS complex is proposed to be recruited to rab-7 on the late endosomal membrane and to regulate late endocytic, phagocytic and autophagic traffic towards lysosomes. Within the HOPS complex, contributes to the normal development of gut granules in the adult intestine. May mediate the tethering of autophagosomes with lysosomes. Has a role in the negative regulation of apoptosis. Required for uptake of exogenous dsRNA which is used in experimental RNA silencing. This Caenorhabditis elegans protein is Vacuolar protein sorting-associated protein 41 homolog.